The primary structure comprises 242 residues: MKKLLSILAVFGVSAVGTTSVVACNKTESNNLSRVKTIAAPATVAASTPKAVTKPEIKTALEANVLKAVQGVVKTATAADFQFEVYKNSKGTALETIDLEAGKVEVYLQITPAKDKTVVIGETRYIKVTLPKHGEVTKVDIKDVTVTEQTVGIKASTPKAVKKDELNAVNTYATLAKAVLDAIQNIAPNAGASDFEITNNGAEGDYEAAKEVEVTVKAKNDSANISGQFKFKAKVTATAPTE.

A signal peptide spans 1-23; that stretch reads MKKLLSILAVFGVSAVGTTSVVA. Cys24 carries N-palmitoyl cysteine lipidation. Cys24 carries S-diacylglycerol cysteine lipidation.

It belongs to the spiralin family. In terms of assembly, seems to occur as dimer, tetramers, and large oligomers of identical chains. Palmitate and stearate are the major lipid components.

It is found in the cell membrane. In terms of biological role, major membrane protein of spiroplasma. The sequence is that of Spiralin (spi) from Spiroplasma melliferum.